Reading from the N-terminus, the 54-residue chain is Ovomucoid (54 aa).

The region spanning 4 to 54 (VDCSDYPKPACTLEYMPLCGSDNKTYGNKCNFCNAVVDSNGTLTLSHFGKC) is the Kazal-like domain. Intrachain disulfides connect Cys6–Cys36, Cys14–Cys33, and Cys22–Cys54. Asn43 is a glycosylation site (N-linked (GlcNAc...) asparagine).

It localises to the secreted. This is Ovomucoid from Dendrocygna arcuata (Wandering whistling-duck).